Consider the following 46-residue polypeptide: Cytochrome b559 subunit beta (46 aa).

Residues 21–37 traverse the membrane as a helical segment; it reads WLALHTLGIPTVFFLGA. A heme-binding site is contributed by H25.

The protein belongs to the PsbE/PsbF family. In terms of assembly, heterodimer of an alpha subunit and a beta subunit. PSII is composed of 1 copy each of membrane proteins PsbA, PsbB, PsbC, PsbD, PsbE, PsbF, PsbH, PsbI, PsbJ, PsbK, PsbL, PsbM, PsbT, PsbX, PsbY, PsbZ, Psb30/Ycf12, peripheral proteins PsbO, CyanoQ (PsbQ), PsbU, PsbV and a large number of cofactors. It forms dimeric complexes. It depends on heme b as a cofactor.

It is found in the cellular thylakoid membrane. This b-type cytochrome is tightly associated with the reaction center of photosystem II (PSII). PSII is a light-driven water:plastoquinone oxidoreductase that uses light energy to abstract electrons from H(2)O, generating O(2) and a proton gradient subsequently used for ATP formation. It consists of a core antenna complex that captures photons, and an electron transfer chain that converts photonic excitation into a charge separation. The protein is Cytochrome b559 subunit beta of Synechococcus sp. (strain CC9605).